A 383-amino-acid polypeptide reads, in one-letter code: Meiotically up-regulated gene 93 protein (383 aa).

Residues 75–108 (KKVIWRRGLAYLRLGHPHLANRDWEHSLELDPNN) form a TPR repeat.

It localises to the cytoplasm. The protein resides in the nucleus. Functionally, has a role in meiosis. The protein is Meiotically up-regulated gene 93 protein (mug93) of Schizosaccharomyces pombe (strain 972 / ATCC 24843) (Fission yeast).